The chain runs to 299 residues: GTPase Era (299 aa).

Residues 5-175 form the Era-type G domain; sequence RSGFVCFVGR…TNVLVSQLPP (171 aa). A G1 region spans residues 13–20; it reads GRPNTGKS. 13–20 contacts GTP; the sequence is GRPNTGKS. Positions 39-43 are G2; the sequence is QTTRH. A G3 region spans residues 60-63; it reads DTPG. GTP contacts are provided by residues 60–64 and 124–127; these read DTPGL and TKID. Positions 124 to 127 are G4; that stretch reads TKID. The interval 154 to 156 is G5; that stretch reads VSA. One can recognise a KH type-2 domain in the interval 206–285; the sequence is VRDELPHSLA…YLDLRVKIAK (80 aa).

This sequence belongs to the TRAFAC class TrmE-Era-EngA-EngB-Septin-like GTPase superfamily. Era GTPase family. As to quaternary structure, monomer. Stays in the monomer conformation, irrespective of the presence of GTP.

It is found in the cell envelope. The protein resides in the secreted. Its subcellular location is the cell wall. Co-purified with RNA upon overexpression in E.coli, but RNAs do not appear to influence the GTPase activity. In terms of biological role, exhibits GTPase activity. Binds RNA but is probably not involved in ribosome assembly in mycobacteria. Cannot use ATP. The sequence is that of GTPase Era from Mycolicibacterium smegmatis (strain ATCC 700084 / mc(2)155) (Mycobacterium smegmatis).